We begin with the raw amino-acid sequence, 95 residues long: Translation initiation factor 1A (95 aa).

In terms of domain architecture, S1-like spans 6–80; it reads SRKNLRMPEE…EKADITWRYE (75 aa).

Belongs to the eIF-1A family.

Its function is as follows. Seems to be required for maximal rate of protein biosynthesis. Enhances ribosome dissociation into subunits and stabilizes the binding of the initiator Met-tRNA(I) to 40 S ribosomal subunits. The chain is Translation initiation factor 1A from Haloarcula marismortui (strain ATCC 43049 / DSM 3752 / JCM 8966 / VKM B-1809) (Halobacterium marismortui).